A 77-amino-acid polypeptide reads, in one-letter code: Protein OPG128 (77 aa).

Belongs to the orthopoxvirus OPG128 family. In terms of assembly, interacts with sulfhydryl oxidase OPG072; this interaction involves formation of a transient disulfide-bonded intermediate, allowing disulfide bond transfer. Interacts with OPG088; this interaction involves formation of a transient disulfide-bonded intermediate, allowing disulfide bond transfer.

Its function is as follows. Late protein which probably participates in disulfide bond formation by functioning as a thiol-disulfide transfer protein between membrane-associated OPG072 and OPG08. The complete pathway for formation of disulfide bonds in intracellular virion membrane proteins sequentially involves oxidation of OPG072, OPG128 and OPG08. The chain is Protein OPG128 (OPG128) from Monkeypox virus.